The primary structure comprises 210 residues: Ribosomal RNA large subunit methyltransferase E (210 aa).

The S-adenosyl-L-methionine site is built by glycine 67, tryptophan 69, aspartate 87, aspartate 103, and aspartate 128. The Proton acceptor role is filled by lysine 168.

Belongs to the class I-like SAM-binding methyltransferase superfamily. RNA methyltransferase RlmE family.

It localises to the cytoplasm. It carries out the reaction uridine(2552) in 23S rRNA + S-adenosyl-L-methionine = 2'-O-methyluridine(2552) in 23S rRNA + S-adenosyl-L-homocysteine + H(+). Specifically methylates the uridine in position 2552 of 23S rRNA at the 2'-O position of the ribose in the fully assembled 50S ribosomal subunit. In Psychrobacter sp. (strain PRwf-1), this protein is Ribosomal RNA large subunit methyltransferase E.